Reading from the N-terminus, the 477-residue chain is Acetolactate synthase small subunit 2, chloroplastic (477 aa).

The transit peptide at 1–53 (MAATTTATSLFSSRLHFQNQNQGYGFPAKTPNSLQVNQIIDGRKMRNATVLSA) directs the protein to the chloroplast. 2 ACT domains span residues 78-150 (TISV…DLSK) and 309-383 (TLSL…NITH). The L-valine site is built by aspartate 85, isoleucine 89, isoleucine 90, asparagine 103, isoleucine 104, asparagine 316, valine 320, leucine 321, asparagine 334, and isoleucine 335.

Belongs to the acetolactate synthase small subunit family. The acetolactate synthase complex contains 4 homodimers of the large catalytic subunits, and 1 homotetramer of the small regulatory subunits. In terms of tissue distribution, expressed in roots in the vascular tissuem in cells around the quiescent center, in floral organs at the tips of young siliques and in the joint region between the silique and the pedicel. Barely detectable in mature leaves or siliques.

It is found in the plastid. It localises to the chloroplast. The protein localises to the peroxisome. It functions in the pathway amino-acid biosynthesis; L-isoleucine biosynthesis; L-isoleucine from 2-oxobutanoate: step 1/4. It participates in amino-acid biosynthesis; L-valine biosynthesis; L-valine from pyruvate: step 1/4. Its function is as follows. Regulatory subunit of acetohydroxy-acid synthase. Involved in the feed-back inhibition by branched-chain amino acids but not in herbicide tolerance. May play a role in valine and isoleucine-mediated feedback inhibition in roots. In vitro, inhibited by valine, but not leucine or isoleucine. Required for reproductive development and sodium homeostasis. In Arabidopsis thaliana (Mouse-ear cress), this protein is Acetolactate synthase small subunit 2, chloroplastic.